A 348-amino-acid chain; its full sequence is Protein RecA (348 aa).

65–72 (GPESSGKT) is a binding site for ATP.

It belongs to the RecA family.

It localises to the cytoplasm. In terms of biological role, can catalyze the hydrolysis of ATP in the presence of single-stranded DNA, the ATP-dependent uptake of single-stranded DNA by duplex DNA, and the ATP-dependent hybridization of homologous single-stranded DNAs. It interacts with LexA causing its activation and leading to its autocatalytic cleavage. The polypeptide is Protein RecA (Saccharophagus degradans (strain 2-40 / ATCC 43961 / DSM 17024)).